The following is a 234-amino-acid chain: Probable plastid-lipid-associated protein 5, chloroplastic (234 aa).

Residues 1–45 constitute a chloroplast transit peptide; it reads MALPWCLKTGVLTSPAAGFNHPSDSGFAVPTKLLSIRKGDRERLR.

It belongs to the PAP/fibrillin family.

It localises to the plastid. The protein localises to the chloroplast thylakoid. This Arabidopsis thaliana (Mouse-ear cress) protein is Probable plastid-lipid-associated protein 5, chloroplastic (PAP5).